A 163-amino-acid chain; its full sequence is Low molecular weight protein-tyrosine phosphatase A (163 aa).

C11 serves as the catalytic Nucleophile. Residue R17 is part of the active site. D126 (proton donor) is an active-site residue.

Belongs to the low molecular weight phosphotyrosine protein phosphatase family.

It carries out the reaction O-phospho-L-tyrosyl-[protein] + H2O = L-tyrosyl-[protein] + phosphate. Functionally, key virulence factor required for mycobacterial survival within host macrophages. Exhibits protein tyrosine phosphatase activity. In terms of biological role, supports mycobacteria survival during infection by modulation of the phagosome maturation and modulation of the normal host signaling pathways, including host innate immune responses and cell apoptosis. The sequence is that of Low molecular weight protein-tyrosine phosphatase A (ptpA) from Mycobacterium bovis (strain ATCC BAA-935 / AF2122/97).